The sequence spans 576 residues: 3-hydroxy-3-methylglutaryl coenzyme A reductase 1 (576 aa).

The segment at 1-35 (MDSRRRPSKPLLTSSGEVLHRKQASPVTDEDQIHR) is disordered. The next 2 membrane-spanning stretches (helical) occupy residues 42 to 62 (ALPL…FSVA) and 89 to 109 (AIVS…IDFV). Glutamate 255 acts as the Charge relay system in catalysis. An N-linked (GlcNAc...) asparagine glycan is attached at asparagine 319. Active-site charge relay system residues include lysine 387 and aspartate 463. A helical transmembrane segment spans residues 532–552 (LLATIVAGSVLAGELSLMSAI). The active-site Proton donor is histidine 561. N-linked (GlcNAc...) asparagine glycosylation occurs at asparagine 565.

This sequence belongs to the HMG-CoA reductase family. As to expression, expressed in trichomes, leaves, flowers, roots and stems.

The protein localises to the endoplasmic reticulum membrane. It is found in the plastid. Its subcellular location is the chloroplast membrane. It localises to the peroxisome membrane. The enzyme catalyses (R)-mevalonate + 2 NADP(+) + CoA = (3S)-3-hydroxy-3-methylglutaryl-CoA + 2 NADPH + 2 H(+). The protein operates within metabolic intermediate biosynthesis; (R)-mevalonate biosynthesis; (R)-mevalonate from acetyl-CoA: step 3/3. In terms of biological role, catalyzes the synthesis of mevalonate, the specific precursor of all isoprenoid compounds present in plants. Component of the triterpene saponins (e.g. ginsenosides or panaxosides) and phytosterols biosynthetic pathways. Promotes triterpenes accumulation in roots. In Cannabis sativa (Hemp), this protein is 3-hydroxy-3-methylglutaryl coenzyme A reductase 1.